We begin with the raw amino-acid sequence, 1246 residues long: Stromal processing peptidase, chloroplastic (1246 aa).

A chloroplast-targeting transit peptide spans 1-136 (MASFPSPPLA…AKIRRRHVLH (136 aa)). H228 serves as a coordination point for Zn(2+). E231 (proton acceptor) is an active-site residue. Zn(2+) is bound at residue H232. E302 is a catalytic residue. A Zn(2+)-binding site is contributed by E309.

It belongs to the peptidase M16 family. The cofactor is Zn(2+).

It is found in the plastid. The protein resides in the chloroplast stroma. Its function is as follows. Cleaves presequences (transit peptides) from chloroplastic protein precursors. Initially recognizes a precursor by binding to the C-terminus of its transit peptide and then removes the transit peptide in a single endoproteolytic step. In a next step, pursues the cleavage of transit peptide to a subfragment form. This is Stromal processing peptidase, chloroplastic from Oryza sativa subsp. japonica (Rice).